A 398-amino-acid chain; its full sequence is Cytochrome P450 165B3 (398 aa).

Residue Cys-347 participates in heme binding.

Belongs to the cytochrome P450 family. It depends on heme as a cofactor.

Its pathway is antibiotic biosynthesis; vancomycin biosynthesis. Its function is as follows. Involved in the coupling of aromatic side chains of the heptapeptide of vancomycin. In Amycolatopsis orientalis (Nocardia orientalis), this protein is Cytochrome P450 165B3 (cyp165B3).